The following is a 199-amino-acid chain: Recombination protein RecR (199 aa).

The segment at 58 to 73 (CSVCFTLSDTPVCAIC) adopts a C4-type zinc-finger fold. The Toprim domain occupies 81–176 (SLLCVVEGPT…TVTRIASGMP (96 aa)).

This sequence belongs to the RecR family.

Functionally, may play a role in DNA repair. It seems to be involved in an RecBC-independent recombinational process of DNA repair. It may act with RecF and RecO. In Desulfosudis oleivorans (strain DSM 6200 / JCM 39069 / Hxd3) (Desulfococcus oleovorans), this protein is Recombination protein RecR.